The primary structure comprises 392 residues: ATP phosphoribosyltransferase regulatory subunit (392 aa).

The protein belongs to the class-II aminoacyl-tRNA synthetase family. HisZ subfamily. Heteromultimer composed of HisG and HisZ subunits.

The protein localises to the cytoplasm. The protein operates within amino-acid biosynthesis; L-histidine biosynthesis; L-histidine from 5-phospho-alpha-D-ribose 1-diphosphate: step 1/9. Functionally, required for the first step of histidine biosynthesis. May allow the feedback regulation of ATP phosphoribosyltransferase activity by histidine. The chain is ATP phosphoribosyltransferase regulatory subunit from Prochlorococcus marinus (strain MIT 9211).